Consider the following 307-residue polypeptide: Ribonuclease Z (307 aa).

Zn(2+)-binding residues include histidine 63, histidine 65, aspartate 67, histidine 68, histidine 143, aspartate 213, and histidine 271. Aspartate 67 serves as the catalytic Proton acceptor.

Belongs to the RNase Z family. As to quaternary structure, homodimer. The cofactor is Zn(2+).

The enzyme catalyses Endonucleolytic cleavage of RNA, removing extra 3' nucleotides from tRNA precursor, generating 3' termini of tRNAs. A 3'-hydroxy group is left at the tRNA terminus and a 5'-phosphoryl group is left at the trailer molecule.. Its function is as follows. Zinc phosphodiesterase, which displays some tRNA 3'-processing endonuclease activity. Probably involved in tRNA maturation, by removing a 3'-trailer from precursor tRNA. This Lactococcus lactis subsp. cremoris (strain SK11) protein is Ribonuclease Z.